Here is a 930-residue protein sequence, read N- to C-terminus: Nonribosomal peptide synthetase acyN (930 aa).

An adenylation (A) domain region spans residues 15–436 (LDPQDNKISV…AGRAKETIIV (422 aa)). Residues 567 to 646 (APSNETEATI…GLAGTLETLM (80 aa)) form the Carrier domain. Ser-604 carries the O-(pantetheine 4'-phosphoryl)serine modification. The interval 665–914 (PLWLVHPGVG…HYTMLGPDNI (250 aa)) is thioesterase (TE) domain.

This sequence belongs to the NRP synthetase family.

The catalysed reaction is 2 3-phenylpyruvate + 2 ATP = polyporic acid + 2 AMP + 2 diphosphate + H(+). The protein operates within secondary metabolite biosynthesis. Hydroxyphenylpyruvate acts more like a competitive inhibitor rather than a substrate. Its function is as follows. Nonribosomal peptide synthetase that mediates the biosynthesis of polyporic acid via the condensation of 2 phenylpyruvate units. Polyporic acid is further hydroxylaed by the cytochrome P450 monooxygenase MO6277 into less toxic ascocorynin. The protein is Nonribosomal peptide synthetase acyN of Ascocoryne sarcoides (Purple jellydisc fungus).